The chain runs to 347 residues: MSESVPPTHTFTQIDDADLTGLNTLGLPARAQRLARPTTLDALSQVLAERNPAEPLFVIGEGSNLVICSDLPGLTLSLAIDGMSLVKQDNTHVWVAAGAGVHWDDLVAWTVEQGWQGLENLSLIPGTVGAAPFQNIGAYGVELSQLLEQVTVMDVVTAQVTHFAGNECEFAYRDSRFKSRDRGRYIITGIELRLNKMPQCNVSYGPLKARFGHLSQADILPAAVREHVIAVRQSKLPAPDVLANAGSFFKNPVVTKERGDALKRRFADLVAYTQPDGVKLAAGWLIEQAGWKGKRLGPVGMHSEQALVLVNHGNATSADVIALAEAVCADVQEKFGVALEQEPVLLP.

Positions 27–197 constitute an FAD-binding PCMH-type domain; that stretch reads LPARAQRLAR…TGIELRLNKM (171 aa). The active site involves Arg173. Ser247 acts as the Proton donor in catalysis. Residue Glu342 is part of the active site.

Belongs to the MurB family. Requires FAD as cofactor.

The protein localises to the cytoplasm. The catalysed reaction is UDP-N-acetyl-alpha-D-muramate + NADP(+) = UDP-N-acetyl-3-O-(1-carboxyvinyl)-alpha-D-glucosamine + NADPH + H(+). It participates in cell wall biogenesis; peptidoglycan biosynthesis. Its function is as follows. Cell wall formation. The chain is UDP-N-acetylenolpyruvoylglucosamine reductase from Alcanivorax borkumensis (strain ATCC 700651 / DSM 11573 / NCIMB 13689 / SK2).